Reading from the N-terminus, the 125-residue chain is Small ribosomal subunit protein uS13 (125 aa).

The interval 95 to 125 is disordered; sequence GLPLRGQRTKTNARTRKGKRKTVANKKIASK.

The protein belongs to the universal ribosomal protein uS13 family. Part of the 30S ribosomal subunit. Forms a loose heterodimer with protein S19. Forms two bridges to the 50S subunit in the 70S ribosome.

In terms of biological role, located at the top of the head of the 30S subunit, it contacts several helices of the 16S rRNA. In the 70S ribosome it contacts the 23S rRNA (bridge B1a) and protein L5 of the 50S subunit (bridge B1b), connecting the 2 subunits; these bridges are implicated in subunit movement. Contacts the tRNAs in the A and P-sites. This chain is Small ribosomal subunit protein uS13, found in Borrelia garinii subsp. bavariensis (strain ATCC BAA-2496 / DSM 23469 / PBi) (Borreliella bavariensis).